Here is a 336-residue protein sequence, read N- to C-terminus: Uridine nucleosidase 1 (336 aa).

Active-site residues include aspartate 29 and histidine 260.

This sequence belongs to the IUNH family. Homodimer. Component of the NSH heterocomplex made of URH1/NSH1 and URH2/NSH2 which exhibits strong xanthosine nucleosidase activity. Interacts with URH2. In terms of tissue distribution, expressed ubiquitously in leaves, flowers, stems, pollen cells, root tip meristem and root vasculature.

The protein localises to the cytoplasm. The enzyme catalyses uridine + H2O = D-ribose + uracil. The catalysed reaction is xanthosine + H2O = D-ribose + xanthine. It carries out the reaction inosine + H2O = hypoxanthine + D-ribose. It catalyses the reaction adenosine + H2O = D-ribose + adenine. Involved in purine and pyrimidine breakdown rather than in pyrimidine salvage, especially in response to dark stress. Together with URH2, required for efficient inosine and xanthosine hydrolytic activities. Unable to use cytidine as a substrate. Can use uridine, inosine, adenosine as well as the cytokinin derivative isopentenyladenine-riboside as substrates. Also hydrolyzes xanthosine with high efficiency. This chain is Uridine nucleosidase 1, found in Arabidopsis thaliana (Mouse-ear cress).